The following is a 141-amino-acid chain: MAIERTLSIIKPDAVAKNVIGQIYARFEAAGLKIVAARMVHLARPEAERFYAVHKERPFFKDLVEFMISGPVMVQVLEGENAVLKNRELMGATDPKKAQTGTIRADFADSIDANAVHGSDAAETAQAEVAFFFPGLNIYPR.

ATP is bound by residues K11, F59, R87, T93, R104, and N114. The active-site Pros-phosphohistidine intermediate is the H117.

This sequence belongs to the NDK family. Homotetramer. Mg(2+) is required as a cofactor.

It is found in the cytoplasm. It carries out the reaction a 2'-deoxyribonucleoside 5'-diphosphate + ATP = a 2'-deoxyribonucleoside 5'-triphosphate + ADP. The enzyme catalyses a ribonucleoside 5'-diphosphate + ATP = a ribonucleoside 5'-triphosphate + ADP. Functionally, major role in the synthesis of nucleoside triphosphates other than ATP. The ATP gamma phosphate is transferred to the NDP beta phosphate via a ping-pong mechanism, using a phosphorylated active-site intermediate. The chain is Nucleoside diphosphate kinase from Verminephrobacter eiseniae (strain EF01-2).